We begin with the raw amino-acid sequence, 286 residues long: Putative WUSCHEL-related homeobox 2 (286 aa).

Disordered regions lie at residues 1-25 (MAPA…VGST) and 128-152 (SSSS…SPTT). A DNA-binding region (homeobox; WUS-type) is located at residues 23–87 (GSTTRWCPTP…NHKARDRQKL (65 aa)).

This sequence belongs to the WUS homeobox family.

It localises to the nucleus. In terms of biological role, transcription factor which may be involved in developmental processes. In Oryza sativa subsp. indica (Rice), this protein is Putative WUSCHEL-related homeobox 2 (WOX2).